The sequence spans 214 residues: Triosephosphate isomerase (214 aa).

Residue 6-8 coordinates substrate; the sequence is NLK. H85 functions as the Electrophile in the catalytic mechanism. The Proton acceptor role is filled by E133. Residues I138, G173, and 194–195 each bind substrate; that span reads AS.

It belongs to the triosephosphate isomerase family. Homotetramer; dimer of dimers.

The protein localises to the cytoplasm. The enzyme catalyses D-glyceraldehyde 3-phosphate = dihydroxyacetone phosphate. Its pathway is carbohydrate biosynthesis; gluconeogenesis. It participates in carbohydrate degradation; glycolysis; D-glyceraldehyde 3-phosphate from glycerone phosphate: step 1/1. In terms of biological role, involved in the gluconeogenesis. Catalyzes stereospecifically the conversion of dihydroxyacetone phosphate (DHAP) to D-glyceraldehyde-3-phosphate (G3P). This Halobacterium salinarum (strain ATCC 700922 / JCM 11081 / NRC-1) (Halobacterium halobium) protein is Triosephosphate isomerase.